The chain runs to 2841 residues: Neurofibromin (2841 aa).

Ala-2 carries the N-acetylalanine modification. Ser-866 and Ser-878 each carry phosphoserine. The Ras-GAP domain maps to 1253–1484 (HLLYQLLWNM…DLARRFFLDI (232 aa)). Residues 1582 to 1740 (EKEEFKALKT…ATLALEEDLK (159 aa)) form the CRAL-TRIO domain. Residues 1582–1839 (EKEEFKALKT…RTRWELSQPD (258 aa)) form a lipid binding region. Phosphoserine occurs at positions 2190 and 2469. The residue at position 2516 (Thr-2516) is a Phosphothreonine. 4 positions are modified to phosphoserine: Ser-2517, Ser-2523, Ser-2525, and Ser-2545. Residues 2557 to 2573 (KRQEMESGITTPPKMRR) carry the Bipartite nuclear localization signal motif. Thr-2567 bears the Phosphothreonine mark. 3 positions are modified to phosphoserine: Ser-2599, Ser-2804, and Ser-2819. A disordered region spans residues 2786–2841 (SLATSQHSPGLDKENVELSPTAGHCNSGRTRHGSASQVQKQRSAGSFKRNSIKKIV). A compositionally biased stretch (polar residues) spans 2818 to 2829 (GSASQVQKQRSA).

As to quaternary structure, interacts with HTR6. Interacts with SPRED2. Post-translationally, ubiquitinated by RNF7/RBX2, leading to its degradation. Expressed predominantly in brain, spinal cord and testis. In terms of tissue distribution, expressed predominantly in adrenal gland, kidney, ovary and lung. As to expression, widely and more weakly expressed. Predominantly expressed in adrenal gland. Widely and more weakly expressed. Expressed mainly in testis.

The protein localises to the nucleus. Its subcellular location is the nucleolus. The protein resides in the cell membrane. Stimulates the GTPase activity of Ras. NF1 shows greater affinity for Ras GAP, but lower specific activity. May be a regulator of Ras activity. The chain is Neurofibromin (Nf1) from Mus musculus (Mouse).